A 248-amino-acid chain; its full sequence is Homeobox protein CHOX-CAD (248 aa).

A DNA-binding region (homeobox) is located at residues 137 to 196 (KDKYRVVYTDHQRLELEKEFHYSRYITIRRKAELAAALGLTERQVKIWFQNRRAKERKVN). Positions 192-248 (ERKVNKKKLQQQSQPTSTTTPTPPAVGTPGPMGTLCSGSAPSLVSSSPLTIKEEFMP) are disordered. 2 stretches are compositionally biased toward low complexity: residues 201 to 211 (QQQSQPTSTTT) and 228 to 240 (SGSA…SSPL).

It belongs to the Caudal homeobox family.

The protein localises to the nucleus. Its function is as follows. May play an important role during the early steps of organogenesis. In Gallus gallus (Chicken), this protein is Homeobox protein CHOX-CAD (CHOX-CAD1).